A 271-amino-acid chain; its full sequence is Shikimate dehydrogenase (NADP(+)) (271 aa).

Shikimate-binding positions include 14–16 (SLS) and Thr61. Catalysis depends on Lys65, which acts as the Proton acceptor. Asn86 and Asp101 together coordinate shikimate. NADP(+) is bound by residues 125–129 (GAGGA) and Ile212. Position 214 (Tyr214) interacts with shikimate. Gly235 provides a ligand contact to NADP(+).

The protein belongs to the shikimate dehydrogenase family. In terms of assembly, homodimer.

The enzyme catalyses shikimate + NADP(+) = 3-dehydroshikimate + NADPH + H(+). It participates in metabolic intermediate biosynthesis; chorismate biosynthesis; chorismate from D-erythrose 4-phosphate and phosphoenolpyruvate: step 4/7. Its function is as follows. Involved in the biosynthesis of the chorismate, which leads to the biosynthesis of aromatic amino acids. Catalyzes the reversible NADPH linked reduction of 3-dehydroshikimate (DHSA) to yield shikimate (SA). In Clostridium perfringens (strain ATCC 13124 / DSM 756 / JCM 1290 / NCIMB 6125 / NCTC 8237 / Type A), this protein is Shikimate dehydrogenase (NADP(+)).